The following is a 384-amino-acid chain: Chorismate synthase (384 aa).

NADP(+)-binding residues include Arg-39 and Arg-45. Residues 130-132 (RSS), 248-249 (NA), Gly-292, 307-311 (KPIPT), and Arg-333 each bind FMN.

The protein belongs to the chorismate synthase family. Homotetramer. Requires FMNH2 as cofactor.

The enzyme catalyses 5-O-(1-carboxyvinyl)-3-phosphoshikimate = chorismate + phosphate. It functions in the pathway metabolic intermediate biosynthesis; chorismate biosynthesis; chorismate from D-erythrose 4-phosphate and phosphoenolpyruvate: step 7/7. Its function is as follows. Catalyzes the anti-1,4-elimination of the C-3 phosphate and the C-6 proR hydrogen from 5-enolpyruvylshikimate-3-phosphate (EPSP) to yield chorismate, which is the branch point compound that serves as the starting substrate for the three terminal pathways of aromatic amino acid biosynthesis. This reaction introduces a second double bond into the aromatic ring system. The chain is Chorismate synthase from Exiguobacterium sibiricum (strain DSM 17290 / CCUG 55495 / CIP 109462 / JCM 13490 / 255-15).